Reading from the N-terminus, the 307-residue chain is Pyridoxal 5'-phosphate synthase subunit PdxS (307 aa).

Aspartate 37 serves as a coordination point for D-ribose 5-phosphate. Residue lysine 94 is the Schiff-base intermediate with D-ribose 5-phosphate of the active site. Glycine 166 contributes to the D-ribose 5-phosphate binding site. A D-glyceraldehyde 3-phosphate-binding site is contributed by arginine 178. Residues glycine 227 and glycine 248–serine 249 each bind D-ribose 5-phosphate.

It belongs to the PdxS/SNZ family. As to quaternary structure, in the presence of PdxT, forms a dodecamer of heterodimers.

It catalyses the reaction aldehydo-D-ribose 5-phosphate + D-glyceraldehyde 3-phosphate + L-glutamine = pyridoxal 5'-phosphate + L-glutamate + phosphate + 3 H2O + H(+). The protein operates within cofactor biosynthesis; pyridoxal 5'-phosphate biosynthesis. In terms of biological role, catalyzes the formation of pyridoxal 5'-phosphate from ribose 5-phosphate (RBP), glyceraldehyde 3-phosphate (G3P) and ammonia. The ammonia is provided by the PdxT subunit. Can also use ribulose 5-phosphate and dihydroxyacetone phosphate as substrates, resulting from enzyme-catalyzed isomerization of RBP and G3P, respectively. The protein is Pyridoxal 5'-phosphate synthase subunit PdxS of Mycobacterium leprae (strain Br4923).